The primary structure comprises 145 residues: MQLYLVLLLISYLLTPIGASILGRCTVAKMLYDGGLNYFEGYSLENWVCLAYFESKFNPSAVYEDPQDGSTGFGLFQIRDNEWCGHGKNLCSVSCTALLNPNLKDTIQCAKKIVKGKHGMGAWPIWSKNCQLSDVLDRWLDGCDL.

A signal peptide spans 1–19 (MQLYLVLLLISYLLTPIGA). Residues 20 to 145 (SILGRCTVAK…LDRWLDGCDL (126 aa)) form the C-type lysozyme domain. 4 disulfides stabilise this stretch: Cys25–Cys143, Cys49–Cys130, Cys84–Cys95, and Cys91–Cys109. Residue Glu54 is part of the active site.

This sequence belongs to the glycosyl hydrolase 22 family. Monomer. Expressed strongly in testis and in epididymis, and weakly in brain and lung. Detected in sperm (at protein level).

It is found in the secreted. Its subcellular location is the cytoplasmic vesicle. The protein localises to the secretory vesicle. The protein resides in the acrosome. It localises to the cell projection. It is found in the cilium. Its subcellular location is the flagellum. In terms of biological role, may be involved in fertilization. Has no detectable bacteriolytic in vitro. Has no lysozyme activity in vitro. This Mus musculus (Mouse) protein is Lysozyme-like protein 4 (Lyzl4).